We begin with the raw amino-acid sequence, 350 residues long: Dauer larva development regulatory growth factor daf-7 (350 aa).

Residues Met-1–Thr-21 form the signal peptide. A propeptide spanning residues Phe-22 to Arg-234 is cleaved from the precursor. The N-linked (GlcNAc...) asparagine glycan is linked to Asn-23. Cystine bridges form between Cys-241–Cys-251, Cys-250–Cys-315, Cys-278–Cys-347, and Cys-282–Cys-349.

Belongs to the TGF-beta family. In terms of tissue distribution, expressed in the chemosensory neurons, including in the ASJ neurons in males. Expressed in the ASI neurons.

The protein resides in the secreted. In terms of biological role, under harsh environmental conditions, larvae enter a developmentally arrested state known as dauer; TGF-beta-like daf-7 acts to inhibit dauer larva formation and promote growth. May be a ligand to cell surface receptor daf-4. May act as a negative regulator of dauer larva development by transducing chemosensory information from ASI neurons. Involved in sensitivity to CO2 levels. Involved in mate searching behavior of males, acting in concert with the neuropeptide pdf-1. In AWC neurons, acts to promote expression of srsx-3, a member of the GPCR family. This is Dauer larva development regulatory growth factor daf-7 from Caenorhabditis elegans.